Consider the following 389-residue polypeptide: Nicotinate phosphoribosyltransferase (389 aa).

Histidine 216 is subject to Phosphohistidine; by autocatalysis.

This sequence belongs to the NAPRTase family. Post-translationally, transiently phosphorylated on a His residue during the reaction cycle. Phosphorylation strongly increases the affinity for substrates and increases the rate of nicotinate D-ribonucleotide production. Dephosphorylation regenerates the low-affinity form of the enzyme, leading to product release.

It carries out the reaction nicotinate + 5-phospho-alpha-D-ribose 1-diphosphate + ATP + H2O = nicotinate beta-D-ribonucleotide + ADP + phosphate + diphosphate. The protein operates within cofactor biosynthesis; NAD(+) biosynthesis; nicotinate D-ribonucleotide from nicotinate: step 1/1. Functionally, catalyzes the synthesis of beta-nicotinate D-ribonucleotide from nicotinate and 5-phospho-D-ribose 1-phosphate at the expense of ATP. This Ralstonia nicotianae (strain ATCC BAA-1114 / GMI1000) (Ralstonia solanacearum) protein is Nicotinate phosphoribosyltransferase.